The following is a 353-amino-acid chain: THUMP domain-containing protein 1 (353 aa).

The span at 1-10 (MAAPAQQTTQ) shows a compositional bias: polar residues. Disordered stretches follow at residues 1 to 20 (MAAPAQQTTQPGGGKRKGKA) and 73 to 96 (YGPEKFTDKDQQPSGSEGEDDDAE). The residue at position 2 (A2) is an N-acetylalanine. Position 79 is a phosphothreonine (T79). 3 positions are modified to phosphoserine: S86, S88, and S119. Residues 147–254 (DMYKTKKKKT…KAVCCLSVVK (108 aa)) enclose the THUMP domain. Residue S270 is modified to Phosphoserine. Residues 270 to 353 (SPKDPSQLNS…GSKSNENDFS (84 aa)) are disordered. Residues 273–282 (DPSQLNSKQG) show a composition bias toward polar residues. Residues 283 to 296 (NGKEAKLESADKSD) are compositionally biased toward basic and acidic residues. The span at 297–327 (QNNTAEGKNNQQVPENTEELGQTKPTSNPQV) shows a compositional bias: polar residues.

It belongs to the THUMPD1 family. In terms of assembly, interacts with NAT10. Binds tRNA.

Functions as a tRNA-binding adapter to mediate NAT10-dependent tRNA acetylation modifying cytidine to N4-acetylcytidine (ac4C). The chain is THUMP domain-containing protein 1 (THUMPD1) from Homo sapiens (Human).